Reading from the N-terminus, the 2530-residue chain is Cullin-9 (2530 aa).

Lysine 87 is covalently cross-linked (Glycyl lysine isopeptide (Lys-Gly) (interchain with G-Cter in ubiquitin)). The region spanning arginine 367–proline 440 is the CPH domain. Disordered stretches follow at residues leucine 585 to serine 639 and arginine 930 to glutamate 951. The span at threonine 940–serine 949 shows a compositional bias: polar residues. Serine 978 is subject to Phosphoserine. In terms of domain architecture, DOC spans proline 1145 to alanine 1324. Residue alanine 1365–threonine 1372 participates in ATP binding. Disordered regions lie at residues glutamate 1435–cysteine 1468 and glycine 1667–leucine 1690. Serine 1459 carries the post-translational modification Phosphoserine. Lysine 1884 participates in a covalent cross-link: Glycyl lysine isopeptide (Lys-Gly) (interchain with G-Cter in NEDD8). The segment at arginine 2070 to valine 2287 is TRIAD supradomain. Zn(2+)-binding residues include cysteine 2074, cysteine 2077, cysteine 2092, histidine 2094, cysteine 2097, cysteine 2100, cysteine 2119, cysteine 2124, cysteine 2164, cysteine 2170, cysteine 2185, cysteine 2188, cysteine 2193, cysteine 2196, histidine 2202, cysteine 2207, cysteine 2240, and cysteine 2243. An RING-type 1 zinc finger spans residues cysteine 2074 to cysteine 2124. The IBR-type zinc finger occupies serine 2144–cysteine 2207. The segment at cysteine 2240–cysteine 2269 adopts an RING-type 2; atypical zinc-finger fold. The active site involves cysteine 2253. Positions 2258, 2261, 2266, 2269, 2277, and 2283 each coordinate Zn(2+). Serine 2440 is subject to Phosphoserine. Positions valine 2443–aspartate 2530 are disordered. Positions asparagine 2452 to serine 2462 are enriched in polar residues. Residues glutamine 2459–asparagine 2500 are a coiled coil. Composition is skewed to acidic residues over residues glutamate 2465–glutamate 2510 and glycine 2520–aspartate 2530.

Belongs to the cullin family. Component of a Cul9-RING complex consisting of CUL9 and RBX1; the CUL9-RBX1 complex is a heterododecamer composed of six CUL9 and six RBX1 protomers. Interacts (via C-terminal TRIAD/RBR supradomain) with E2 ubiquitin-conjugating enzyme UBE2L3. Interacts with CUL7; the interaction with the CUL7 component of the 3M complex leads to inhibition of CUL9 activity. The CUL7-CUL9 heterodimer seems to interact specifically with TP53, likely via the CPH domain. Forms a complex with p53/TP53 in the cytoplasm of unstressed cells. Interacts with UBCH7 and UBCH8. In terms of processing, autoubiquitinated by the CUL9-RBX1 complex at Lys-87. Neddylated. Neddylation is mediated by E1 enzyme UBA3-NAE1 complex and E2 enzyme UBE2F. Structural rearrangment of the C-terminal TRIAD/RBR supradomain may play a role in neddylation and deneddylation.

It localises to the cytoplasm. Core component of the Cul9-RING ubiquitin-protein ligase complex composed of CUL9 and RBX1. The CUL9-RBX1 complex mediates ubiquitination and subsequent degradation of BIRC5 and is required to maintain microtubule dynamics and genome integrity. Acts downstream of the 3M complex, which inhibits CUL9 activity and the ubiquitination of BIRC5. The CUL9-RBX1 complex also mediates mono-ubiquitination of p53/TP53. Acts as a cytoplasmic anchor protein in p53/TP53-associated protein complex. Regulates the subcellular localization of p53/TP53 and its subsequent function. Ubiquitinates apurinic/apyrimidinic endodeoxyribonuclease APEX2. Ubiquitination by the CUL9-RBX1 complex is predominantly mediated by E2 ubiquitin-conjugating enzymes UBE2L3 and UBE2D2. The protein is Cullin-9 (Cul9) of Mus musculus (Mouse).